Reading from the N-terminus, the 106-residue chain is L-rhamnose mutarotase (106 aa).

Y20 provides a ligand contact to substrate. The active-site Proton donor is H24. Substrate-binding positions include Y43 and 78–79 (WW).

The protein belongs to the rhamnose mutarotase family. In terms of assembly, homodimer.

It localises to the cytoplasm. It catalyses the reaction alpha-L-rhamnose = beta-L-rhamnose. The protein operates within carbohydrate metabolism; L-rhamnose metabolism. Its function is as follows. Involved in the anomeric conversion of L-rhamnose. In Rhizobium johnstonii (strain DSM 114642 / LMG 32736 / 3841) (Rhizobium leguminosarum bv. viciae), this protein is L-rhamnose mutarotase.